The chain runs to 609 residues: UvrABC system protein C (609 aa).

The GIY-YIG domain maps to His-13–Val-91. Positions Gln-201–Val-236 constitute a UVR domain.

The protein belongs to the UvrC family. Interacts with UvrB in an incision complex.

It is found in the cytoplasm. Functionally, the UvrABC repair system catalyzes the recognition and processing of DNA lesions. UvrC both incises the 5' and 3' sides of the lesion. The N-terminal half is responsible for the 3' incision and the C-terminal half is responsible for the 5' incision. The protein is UvrABC system protein C of Histophilus somni (strain 2336) (Haemophilus somnus).